The primary structure comprises 265 residues: Ribonuclease 3 (265 aa).

The region spanning 34 to 157 is the RNase III domain; sequence LAVLTRKLGY…LIGAIYLDSQ (124 aa). Glu-70 is a Mg(2+) binding site. Asp-74 is an active-site residue. Mg(2+)-binding residues include Asp-143 and Glu-146. Residue Glu-146 is part of the active site. One can recognise a DRBM domain in the interval 185–256; that stretch reads DAKSRLQEWL…AELMINQLHK (72 aa).

This sequence belongs to the ribonuclease III family. In terms of assembly, homodimer. Mg(2+) serves as cofactor.

The protein resides in the cytoplasm. It catalyses the reaction Endonucleolytic cleavage to 5'-phosphomonoester.. Its function is as follows. Digests double-stranded RNA. Involved in the processing of primary rRNA transcript to yield the immediate precursors to the large and small rRNAs (23S and 16S). Processes some mRNAs, and tRNAs when they are encoded in the rRNA operon. Processes pre-crRNA and tracrRNA of type II CRISPR loci if present in the organism. The sequence is that of Ribonuclease 3 from Psychrobacter arcticus (strain DSM 17307 / VKM B-2377 / 273-4).